Reading from the N-terminus, the 213-residue chain is Ribonuclease HII (213 aa).

One can recognise an RNase H type-2 domain in the interval 20 to 209; it reads ELVAGVDEVG…VRQAYEALEG (190 aa). A divalent metal cation contacts are provided by Asp26, Glu27, and Asp118.

The protein belongs to the RNase HII family. It depends on Mn(2+) as a cofactor. Requires Mg(2+) as cofactor.

It localises to the cytoplasm. It carries out the reaction Endonucleolytic cleavage to 5'-phosphomonoester.. Its function is as follows. Endonuclease that specifically degrades the RNA of RNA-DNA hybrids. The protein is Ribonuclease HII of Pseudomonas fluorescens (strain Pf0-1).